Here is a 314-residue protein sequence, read N- to C-terminus: Galectin-12 (314 aa).

2 Galectin domains span residues 27 to 161 (YGTT…VGFL) and 190 to 314 (CSRA…CVHC).

It is found in the nucleus. Functionally, binds lactose. May participate in the apoptosis of adipocytes. This chain is Galectin-12 (Lgals12), found in Mus musculus (Mouse).